A 389-amino-acid chain; its full sequence is Cytochrome B translational activator CBS2 (389 aa).

The protein localises to the mitochondrion. Its function is as follows. Translational activator of cytochrome b. The cytochrome b (coB) leader RNA may represent the target sequence for CBS1 and/ or CBS2. In Saccharomyces cerevisiae (strain ATCC 204508 / S288c) (Baker's yeast), this protein is Cytochrome B translational activator CBS2 (CBS2).